The primary structure comprises 368 residues: tRNA/tmRNA (uracil-C(5))-methyltransferase (368 aa).

S-adenosyl-L-methionine is bound by residues Q190, Y218, N223, E239, and D301. Catalysis depends on C326, which acts as the Nucleophile. The active-site Proton acceptor is E360.

Belongs to the class I-like SAM-binding methyltransferase superfamily. RNA M5U methyltransferase family. TrmA subfamily.

The enzyme catalyses uridine(54) in tRNA + S-adenosyl-L-methionine = 5-methyluridine(54) in tRNA + S-adenosyl-L-homocysteine + H(+). It carries out the reaction uridine(341) in tmRNA + S-adenosyl-L-methionine = 5-methyluridine(341) in tmRNA + S-adenosyl-L-homocysteine + H(+). Functionally, dual-specificity methyltransferase that catalyzes the formation of 5-methyluridine at position 54 (m5U54) in all tRNAs, and that of position 341 (m5U341) in tmRNA (transfer-mRNA). This is tRNA/tmRNA (uracil-C(5))-methyltransferase from Aliivibrio fischeri (strain MJ11) (Vibrio fischeri).